A 277-amino-acid chain; its full sequence is Proteasome subunit beta type-7 (277 aa).

Positions 1–43 (MAAVSVYERPVGGFSFDNCRRNAVLEADFAKKGYKLPTARKTG) are cleaved as a propeptide — removed in mature form. The Nucleophile role is filled by threonine 44.

The protein belongs to the peptidase T1B family. The 26S proteasome consists of a 20S proteasome core and two 19S regulatory subunits. The 20S proteasome core is a barrel-shaped complex made of 28 subunits that are arranged in four stacked rings. The two outer rings are each formed by seven alpha subunits, and the two inner rings are formed by seven beta subunits. The proteolytic activity is exerted by three beta-subunits PSMB5, PSMB6 and PSMB7.

The protein localises to the cytoplasm. It localises to the nucleus. The enzyme catalyses Cleavage of peptide bonds with very broad specificity.. Component of the 20S core proteasome complex involved in the proteolytic degradation of most intracellular proteins. This complex plays numerous essential roles within the cell by associating with different regulatory particles. Associated with two 19S regulatory particles, forms the 26S proteasome and thus participates in the ATP-dependent degradation of ubiquitinated proteins. The 26S proteasome plays a key role in the maintenance of protein homeostasis by removing misfolded or damaged proteins that could impair cellular functions, and by removing proteins whose functions are no longer required. Associated with the PA200 or PA28, the 20S proteasome mediates ubiquitin-independent protein degradation. This type of proteolysis is required in several pathways including spermatogenesis (20S-PA200 complex) or generation of a subset of MHC class I-presented antigenic peptides (20S-PA28 complex). Within the 20S core complex, PSMB7 displays a trypsin-like activity. This Bos taurus (Bovine) protein is Proteasome subunit beta type-7 (PSMB7).